The chain runs to 414 residues: Putative transporter YoaB (414 aa).

Over 1–11 the chain is Cytoplasmic; it reads MLDKIGIPKRL. A helical membrane pass occupies residues 12-32; that stretch reads AWGFLGVVLFMMGDGLEQGWL. The Extracellular portion of the chain corresponds to 33–47; it reads SPFLIENGLTVQQSA. The chain crosses the membrane as a helical span at residues 48-68; sequence SIFSIYGIALAIASWFSGVCL. Topologically, residues 69–75 are cytoplasmic; the sequence is EAFGAKR. The chain crosses the membrane as a helical span at residues 76–96; the sequence is TMFMGLLFYVIGTAAFIVFGF. Over 97-107 the chain is Extracellular; that stretch reads EQLNLPVMYVT. A helical membrane pass occupies residues 108–128; it reads YFVKGLGYPLFAYSFLTWVIY. The Cytoplasmic segment spans residues 129 to 136; that stretch reads RTPQSKLS. A helical transmembrane segment spans residues 137–157; sequence TAVGWFWIAYCLGMFVFGAWY. Topologically, residues 158-167 are extracellular; it reads SSYAIKAFGY. The chain crosses the membrane as a helical span at residues 168 to 188; that stretch reads LNTLWSSIFWVCLGAFFALFI. Residues 189-219 are Cytoplasmic-facing; the sequence is NKDRFEKKKRKRSETAEELLKGVTILFTNPR. Residues 220 to 240 traverse the membrane as a helical segment; the sequence is VLTGGIIRIINSIGTYGFPVF. Topologically, residues 241–255 are extracellular; it reads LPMHMAQHGISTNVW. The helical transmembrane segment at 256–276 threads the bilayer; sequence LQIWGTIFLGNIVFNLIFGIV. Topologically, residues 277-286 are cytoplasmic; the sequence is GDKFGWKNTV. The helical transmembrane segment at 287–307 threads the bilayer; it reads IWFGGVGCGIFTVLLYYAPVF. Topologically, residues 308–316 are extracellular; that stretch reads SGGSLAVVS. Residues 317–337 form a helical membrane-spanning segment; that stretch reads VIGFIWGGLLAGYVPIGAIVP. The Cytoplasmic segment spans residues 338–343; that stretch reads TVAGKD. A helical transmembrane segment spans residues 344–364; the sequence is KGAAMSVLNLAAGLSAFVGPA. The Extracellular segment spans residues 365-375; that stretch reads LAWLFIGLVGA. A helical membrane pass occupies residues 376–398; sequence QGVVWIFAALYLASAVLTKCIHI. Over 399 to 414 the chain is Cytoplasmic; sequence PEEKAVKEETSPQYAS.

The protein belongs to the major facilitator superfamily. Sugar transporter (TC 2.A.1.1) family. CsbX subfamily.

It localises to the cell membrane. This Bacillus subtilis (strain 168) protein is Putative transporter YoaB (yoaB).